Here is a 205-residue protein sequence, read N- to C-terminus: Large ribosomal subunit protein uL4 (205 aa).

The disordered stretch occupies residues 43 to 96 (GKRQGTSKVKNRSAVRGGGKKPWRQKGTGRARQGSIRSPQWRGGGTVFGPTPRS). The span at 51–71 (VKNRSAVRGGGKKPWRQKGTG) shows a compositional bias: basic residues.

Belongs to the universal ribosomal protein uL4 family. As to quaternary structure, part of the 50S ribosomal subunit.

Its function is as follows. One of the primary rRNA binding proteins, this protein initially binds near the 5'-end of the 23S rRNA. It is important during the early stages of 50S assembly. It makes multiple contacts with different domains of the 23S rRNA in the assembled 50S subunit and ribosome. Forms part of the polypeptide exit tunnel. This is Large ribosomal subunit protein uL4 from Lactobacillus helveticus (strain DPC 4571).